The sequence spans 132 residues: Transcriptional regulator MraZ (132 aa).

2 consecutive SpoVT-AbrB domains span residues 5–47 (TYEH…SKDD) and 76–119 (TVEI…SKNK).

The protein belongs to the MraZ family. As to quaternary structure, forms oligomers.

It is found in the cytoplasm. The protein resides in the nucleoid. This chain is Transcriptional regulator MraZ, found in Mycoplasma capricolum subsp. capricolum (strain California kid / ATCC 27343 / NCTC 10154).